The following is a 166-amino-acid chain: Small ribosomal subunit protein bS18m (166 aa).

A mitochondrion-targeting transit peptide spans 1-31 (MLGRRIFSPAPNRGFILCNLIQSNNSTRRGF). Residues 29 to 48 (RGFSDNRKFNERNSEASSNV) form a disordered region. Over residues 30–42 (GFSDNRKFNERNS) the composition is skewed to basic and acidic residues.

The protein belongs to the bacterial ribosomal protein bS18 family. As to quaternary structure, component of the mitochondrial small ribosomal subunit (mt-SSU). Mature yeast 74S mitochondrial ribosomes consist of a small (37S) and a large (54S) subunit. The 37S small subunit contains a 15S ribosomal RNA (15S mt-rRNA) and at least 32 different proteins. The 54S large subunit contains a 21S rRNA (21S mt-rRNA) and at least 45 different proteins.

It is found in the mitochondrion. Component of the mitochondrial ribosome (mitoribosome), a dedicated translation machinery responsible for the synthesis of mitochondrial genome-encoded proteins, including at least some of the essential transmembrane subunits of the mitochondrial respiratory chain. The mitoribosomes are attached to the mitochondrial inner membrane and translation products are cotranslationally integrated into the membrane. This is Small ribosomal subunit protein bS18m (rsm18) from Schizosaccharomyces pombe (strain 972 / ATCC 24843) (Fission yeast).